We begin with the raw amino-acid sequence, 550 residues long: Membrane-bound alkaline phosphatase (550 aa).

Residues 1 to 39 form the signal peptide; that stretch reads MSTWWLVVVAAAAAAGLVRAEDRYHPERLAAGEASAATR. Residue D83 coordinates Mg(2+). Residue D83 coordinates Zn(2+). The active-site Phosphoserine intermediate is S133. Residues H196, S198, and E356 each coordinate Mg(2+). D361, H365, D402, H403, and H479 together coordinate Zn(2+). S524 carries GPI-anchor amidated serine lipidation. The propeptide at 525-550 is removed in mature form; it reads AATVPTAALLSLLLAAFITLRHQCFL.

The protein belongs to the alkaline phosphatase family. Requires Mg(2+) as cofactor. Zn(2+) serves as cofactor. Midgut.

It localises to the cell membrane. It catalyses the reaction a phosphate monoester + H2O = an alcohol + phosphate. This is Membrane-bound alkaline phosphatase (Alp-m) from Bombyx mori (Silk moth).